The chain runs to 334 residues: Ornithine carbamoyltransferase (334 aa).

Carbamoyl phosphate is bound by residues 57–60 (STRT), Gln-84, Arg-108, and 135–138 (HPTQ). L-ornithine-binding positions include Asn-168, Asp-232, and 236-237 (SM). Carbamoyl phosphate is bound by residues 274-275 (CL) and Arg-321.

Belongs to the aspartate/ornithine carbamoyltransferase superfamily. OTCase family.

It localises to the cytoplasm. The enzyme catalyses carbamoyl phosphate + L-ornithine = L-citrulline + phosphate + H(+). It functions in the pathway amino-acid degradation; L-arginine degradation via ADI pathway; carbamoyl phosphate from L-arginine: step 2/2. Reversibly catalyzes the transfer of the carbamoyl group from carbamoyl phosphate (CP) to the N(epsilon) atom of ornithine (ORN) to produce L-citrulline. This chain is Ornithine carbamoyltransferase, found in Haemophilus influenzae (strain PittGG).